Reading from the N-terminus, the 382-residue chain is uncharacterized protein (382 aa).

A run of 12 helical transmembrane segments spans residues 8 to 28 (VMLLLCGLLLLTLAIAVLNTL), 45 to 65 (MVSSSYFTGNLVGTLFTGYLI), 75 to 95 (YLASLIFAAGCVGLGVMVGFW), 102 to 122 (FIAGIGCAMIWVVVESALMCS), 131 to 151 (LLAAYMMAYYMGTFLGQLLVS), 157 to 177 (LLHVLPWVTGMILAGILPLLF), 204 to 224 (LGVNGCIISGIVLGSLYGLMP), 231 to 251 (GMANASIGFWMAVLVSAGILG), 270 to 290 (VQVFVVILGSIAMLTQAAMAP), 291 to 311 (ALFILGAAGFTLYPVAMAWAC), 325 to 345 (ALLLSYTVGSLLGPSFAAMLM), and 349 to 369 (SDNLLFIMIASVSFIYLLMLL).

Belongs to the major facilitator superfamily. YcaD (TC 2.A.1.26) family.

It is found in the cell inner membrane. This is an uncharacterized protein from Salmonella enteritidis PT4 (strain P125109).